Here is a 311-residue protein sequence, read N- to C-terminus: Mediator of RNA polymerase II transcription subunit 27 (311 aa).

Position 132 is a phosphoserine (serine 132). Lysine 134 is modified (N6-methyllysine).

The protein belongs to the Mediator complex subunit 27 family. In terms of assembly, component of the Mediator complex, which is composed of MED1, MED4, MED6, MED7, MED8, MED9, MED10, MED11, MED12, MED13, MED13L, MED14, MED15, MED16, MED17, MED18, MED19, MED20, MED21, MED22, MED23, MED24, MED25, MED26, MED27, MED29, MED30, MED31, CCNC, CDK8 and CDC2L6/CDK11. The MED12, MED13, CCNC and CDK8 subunits form a distinct module termed the CDK8 module. Mediator containing the CDK8 module is less active than Mediator lacking this module in supporting transcriptional activation. Individual preparations of the Mediator complex lacking one or more distinct subunits have been variously termed ARC, CRSP, DRIP, PC2, SMCC and TRAP.

It is found in the nucleus. Functionally, component of the Mediator complex, a coactivator involved in the regulated transcription of nearly all RNA polymerase II-dependent genes. Mediator functions as a bridge to convey information from gene-specific regulatory proteins to the basal RNA polymerase II transcription machinery. Mediator is recruited to promoters by direct interactions with regulatory proteins and serves as a scaffold for the assembly of a functional preinitiation complex with RNA polymerase II and the general transcription factors. The polypeptide is Mediator of RNA polymerase II transcription subunit 27 (MED27) (Homo sapiens (Human)).